The chain runs to 231 residues: Large ribosomal subunit protein uL1 (231 aa).

The protein belongs to the universal ribosomal protein uL1 family. As to quaternary structure, part of the 50S ribosomal subunit.

In terms of biological role, binds directly to 23S rRNA. The L1 stalk is quite mobile in the ribosome, and is involved in E site tRNA release. Protein L1 is also a translational repressor protein, it controls the translation of the L11 operon by binding to its mRNA. This Pseudomonas fluorescens (strain ATCC BAA-477 / NRRL B-23932 / Pf-5) protein is Large ribosomal subunit protein uL1.